We begin with the raw amino-acid sequence, 182 residues long: Ribosome maturation factor RimM (182 aa).

The 80-residue stretch at 103–182 (EDEFYWRELF…RIEVDWDPAF (80 aa)) folds into the PRC barrel domain.

It belongs to the RimM family. As to quaternary structure, binds ribosomal protein uS19.

The protein resides in the cytoplasm. In terms of biological role, an accessory protein needed during the final step in the assembly of 30S ribosomal subunit, possibly for assembly of the head region. Essential for efficient processing of 16S rRNA. May be needed both before and after RbfA during the maturation of 16S rRNA. It has affinity for free ribosomal 30S subunits but not for 70S ribosomes. This Vibrio cholerae serotype O1 (strain ATCC 39315 / El Tor Inaba N16961) protein is Ribosome maturation factor RimM.